A 973-amino-acid polypeptide reads, in one-letter code: DENN domain-containing protein C297.05 (973 aa).

A compositionally biased stretch (polar residues) spans 69–79 (AHHNTTGSNSV). The tract at residues 69-136 (AHHNTTGSNS…YHSRKPYSEP (68 aa)) is disordered. 2 positions are modified to phosphoserine: Ser-134 and Ser-318. The 259-residue stretch at 169–427 (ALPLFAATHP…NICCDVPLPP (259 aa)) folds into the uDENN domain. The cDENN domain maps to 449-586 (VNEIPGWNDV…LRSKLQAHLK (138 aa)). The 332-residue stretch at 588-919 (AAPLHDKFYV…DRCELDLNDP (332 aa)) folds into the dDENN domain. A disordered region spans residues 693–713 (RNFSSPPFTRPASPSSSKFRF). A Phosphoserine modification is found at Ser-726. The segment at 729–750 (SPYSVPELRSSESNQNKAGSIN) is disordered. A compositionally biased stretch (polar residues) spans 739–750 (SESNQNKAGSIN).

It is found in the cytoplasm. The protein localises to the nucleus. In Schizosaccharomyces pombe (strain 972 / ATCC 24843) (Fission yeast), this protein is DENN domain-containing protein C297.05.